The chain runs to 513 residues: Xyloglucan 6-xylosyltransferase 4 (513 aa).

Over 1–39 (MFQDGSRSSGSGRGLSTTAVSNGGWRTRGFLRGWQIQNT) the chain is Cytoplasmic. A helical; Signal-anchor for type II membrane protein membrane pass occupies residues 40–60 (LFNNIKFMILCCFVTILILLG). Over 61 to 513 (TIRVGNLGSS…IRRMHMETKP (453 aa)) the chain is Lumenal. Residues N76, N110, N142, N174, and N490 are each glycosylated (N-linked (GlcNAc...) asparagine).

Belongs to the glycosyltransferase 34 family.

The protein localises to the golgi apparatus membrane. It catalyses the reaction Transfers an alpha-D-xylosyl residue from UDP-D-xylose to a glucose residue in xyloglucan, forming an alpha-(1-&gt;6)-D-xylosyl-D-glucose linkage.. Functionally, xylosyltransferase specific to UDP-D-xylose that accepts cellohexaose as substrate to produce xyloglucan. The protein is Xyloglucan 6-xylosyltransferase 4 of Arabidopsis thaliana (Mouse-ear cress).